A 637-amino-acid chain; its full sequence is Glutamate--cysteine ligase catalytic subunit (637 aa).

N-acetylmethionine is present on Met1. 2 positions are modified to phosphoserine: Ser5 and Ser8.

This sequence belongs to the glutamate--cysteine ligase type 3 family. In terms of assembly, heterodimer of a catalytic heavy chain and a regulatory light chain. As to expression, most abundant in kidney. Also found in liver and testis.

It carries out the reaction L-cysteine + L-glutamate + ATP = gamma-L-glutamyl-L-cysteine + ADP + phosphate + H(+). The catalysed reaction is (2S)-2-aminobutanoate + L-glutamate + ATP = gamma-L-glutamyl-(2S)-2-aminobutanoate + ADP + phosphate + H(+). It functions in the pathway sulfur metabolism; glutathione biosynthesis; glutathione from L-cysteine and L-glutamate: step 1/2. With respect to regulation, feedback inhibition by glutathione. Functionally, catalyzes the ATP-dependent ligation of L-glutamate and L-cysteine and participates in the first and rate-limiting step in glutathione biosynthesis. This Rattus norvegicus (Rat) protein is Glutamate--cysteine ligase catalytic subunit.